Consider the following 330-residue polypeptide: Erlin-2-B (330 aa).

Residues 1–2 are Cytoplasmic-facing; sequence MS. Residues 3 to 23 traverse the membrane as a helical segment; the sequence is HAGAIAALGVALIAAALFSAI. Residues 24 to 330 lie on the Lumenal side of the membrane; that stretch reads HKIEEGHVGV…NEPAAAEELK (307 aa). The N-linked (GlcNAc...) asparagine glycan is linked to Asn-106. Positions 308-330 are disordered; the sequence is SSSAGPRVQSAKRNEPAAAEELK. Over residues 319-330 the composition is skewed to basic and acidic residues; that stretch reads KRNEPAAAEELK.

Belongs to the band 7/mec-2 family.

The protein localises to the endoplasmic reticulum membrane. In terms of biological role, mediates the endoplasmic reticulum-associated degradation (ERAD) of inositol 1,4,5-trisphosphate receptors (IP3Rs). Promotes sterol-accelerated ERAD of HMGCR. Involved in regulation of cellular cholesterol homeostasis by regulation the SREBP signaling pathway. This Xenopus laevis (African clawed frog) protein is Erlin-2-B (erlin2-b).